A 414-amino-acid polypeptide reads, in one-letter code: 2,3-diketo-5-methylthiopentyl-1-phosphate enolase (414 aa).

Catalysis depends on lysine 99, which acts as the Proton acceptor. Substrate is bound by residues lysine 148, 174-177, histidine 265, glycine 338, and 360-361; these read KDDE and GG. The Mg(2+) site is built by lysine 174, aspartate 176, and glutamate 177. Lysine 174 carries the N6-carboxylysine modification.

It belongs to the RuBisCO large chain family. Type IV subfamily. In terms of assembly, homodimer. Mg(2+) is required as a cofactor.

The enzyme catalyses 5-methylsulfanyl-2,3-dioxopentyl phosphate = 2-hydroxy-5-methylsulfanyl-3-oxopent-1-enyl phosphate. It functions in the pathway amino-acid biosynthesis; L-methionine biosynthesis via salvage pathway; L-methionine from S-methyl-5-thio-alpha-D-ribose 1-phosphate: step 3/6. In terms of biological role, catalyzes the enolization of 2,3-diketo-5-methylthiopentyl-1-phosphate (DK-MTP-1-P) into 2-hydroxy-3-keto-5-methylthiopentenyl-1-phosphate (HK-MTPenyl-1-P). This chain is 2,3-diketo-5-methylthiopentyl-1-phosphate enolase, found in Bacillus anthracis (strain CDC 684 / NRRL 3495).